The chain runs to 190 residues: Peptidyl-tRNA hydrolase (190 aa).

Position 18 (Y18) interacts with tRNA. H23 serves as the catalytic Proton acceptor. 3 residues coordinate tRNA: F69, N71, and N117.

This sequence belongs to the PTH family. As to quaternary structure, monomer.

Its subcellular location is the cytoplasm. The catalysed reaction is an N-acyl-L-alpha-aminoacyl-tRNA + H2O = an N-acyl-L-amino acid + a tRNA + H(+). In terms of biological role, hydrolyzes ribosome-free peptidyl-tRNAs (with 1 or more amino acids incorporated), which drop off the ribosome during protein synthesis, or as a result of ribosome stalling. Catalyzes the release of premature peptidyl moieties from peptidyl-tRNA molecules trapped in stalled 50S ribosomal subunits, and thus maintains levels of free tRNAs and 50S ribosomes. This Rhodococcus opacus (strain B4) protein is Peptidyl-tRNA hydrolase.